A 399-amino-acid chain; its full sequence is Transcription termination factor 1, mitochondrial (399 aa).

The transit peptide at 1–57 directs the protein to the mitochondrion; it reads MQSLSLGQTSISKGLNYLTIMAPGNLWHMRNNFLFGSRCWMTRFSAENIFKSVSFRL. 5 interaction with DNA regions span residues 169–170, 247–251, 324–331, 355–358, and 384–391; these read RS, QSTKR, AEKKFNDK, SIST, and SKKRYEAK.

This sequence belongs to the mTERF family. Monomer. Post-translationally, phosphoprotein with mostly four phosphate groups. While the DNA-binding activity is unaffected by the phosphorylation state, only the phosphorylated form of the protein is active for termination activity. Functioning seems to be regulated by phosphorylation.

The protein localises to the mitochondrion. In terms of biological role, transcription termination factor. Binds to a 28 bp region within the tRNA(Leu(uur)) gene at a position immediately adjacent to and downstream of the 16S rRNA gene; this region comprises a tridecamer sequence critical for directing accurate termination. Binds DNA along the major grove and promotes DNA bending and partial unwinding. Promotes base flipping. Transcription termination activity appears to be polarized with highest specificity for transcripts initiated on the light strand. The protein is Transcription termination factor 1, mitochondrial (MTERF1) of Homo sapiens (Human).